Consider the following 418-residue polypeptide: Glutamyl-tRNA reductase (418 aa).

Residues 49 to 52, Ser109, 114 to 116, and Gln120 contribute to the substrate site; these read TCNR and EPQ. Residue Cys50 is the Nucleophile of the active site. 189 to 194 is an NADP(+) binding site; the sequence is GAGETI.

Belongs to the glutamyl-tRNA reductase family. Homodimer.

It catalyses the reaction (S)-4-amino-5-oxopentanoate + tRNA(Glu) + NADP(+) = L-glutamyl-tRNA(Glu) + NADPH + H(+). It functions in the pathway porphyrin-containing compound metabolism; protoporphyrin-IX biosynthesis; 5-aminolevulinate from L-glutamyl-tRNA(Glu): step 1/2. Catalyzes the NADPH-dependent reduction of glutamyl-tRNA(Glu) to glutamate 1-semialdehyde (GSA). In Escherichia coli O6:K15:H31 (strain 536 / UPEC), this protein is Glutamyl-tRNA reductase.